The following is a 21-amino-acid chain: 20 kDa chaperonin, chloroplastic (21 aa).

The protein belongs to the GroES chaperonin family. Forms stable complexes with CPN60 in the presence of ATP.

The protein resides in the plastid. It is found in the chloroplast. In terms of biological role, seems to function only as a co-chaperone, along with cpn60, and in certain cases is essential for the discharge of biologically active proteins from cpn60. This chain is 20 kDa chaperonin, chloroplastic (CPN21), found in Pisum sativum (Garden pea).